We begin with the raw amino-acid sequence, 185 residues long: Protein GrpE (185 aa).

Residues 1 to 22 (MTASQEPVDQAPESNEPAPAVP) are disordered.

Belongs to the GrpE family. Homodimer.

Its subcellular location is the cytoplasm. Participates actively in the response to hyperosmotic and heat shock by preventing the aggregation of stress-denatured proteins, in association with DnaK and GrpE. It is the nucleotide exchange factor for DnaK and may function as a thermosensor. Unfolded proteins bind initially to DnaJ; upon interaction with the DnaJ-bound protein, DnaK hydrolyzes its bound ATP, resulting in the formation of a stable complex. GrpE releases ADP from DnaK; ATP binding to DnaK triggers the release of the substrate protein, thus completing the reaction cycle. Several rounds of ATP-dependent interactions between DnaJ, DnaK and GrpE are required for fully efficient folding. The chain is Protein GrpE from Bordetella petrii (strain ATCC BAA-461 / DSM 12804 / CCUG 43448).